A 139-amino-acid polypeptide reads, in one-letter code: 2S seed storage albumin protein (139 aa).

Residues 1-15 (AALLVALLFVANAAA) form the signal peptide. IgE-binding stretches follow at residues 16-30 (FRTTITTMEIDEDID), 29-34 (IDNPRR), 64-78 (GYDEDNQRQHFRQCC), 65-73 (YDEDNQRQH), 95-103 (QVVRRQQQQ), 99-111 (RQQQQQGLRGEEM), 102-114 (QQQGLRGEEMEEM), 105-117 (GLRGEEMEEMVQS), 112-126 (EEMVQSARDLPNECG), 125-136 (CGISSQRCEIRR), and 125-139 (CGISSQRCEIRRSWF). Propeptides lie at residues 16–31 (FRTTITTMEIDEDIDN) and 58–71 (QQSRSGGYDEDNQR). Intrachain disulfides connect C39–C88, C52–C77, C78–C125, and C90–C132. Residues 104–115 (QGLRGEEMEEMV) are immunodominant epitope. IgE-binding; binds to IgE in 75% of the 20 walnut-allergic patients tested. Residues 107-110 (RGEE) form a minimally required for IgE-binding by the immunodominant epitope region. The propeptide occupies 136–139 (RSWF).

It belongs to the 2S seed storage albumins family. The mature protein consists of a small chain and a large chain linked by disulfide bonds. As to expression, expressed in seed (at protein level). Expressed in the peel of mature seed.

Functionally, seed storage protein. The protein is 2S seed storage albumin protein of Juglans regia (English walnut).